Here is a 689-residue protein sequence, read N- to C-terminus: Protein asunder (689 aa).

Residues 521 to 550 (NGARLKLSKAKDQYRLLYRELEQLIQLNAT) adopt a coiled-coil conformation. Disordered regions lie at residues 591–619 (SPER…SKRR) and 665–689 (GTKD…SVRS). Residues 599 to 614 (SSVGASGSSNSNSLLK) are compositionally biased toward low complexity. Residues 613–619 (LKASKRR) carry the Nuclear localization signal (NLS) motif.

Belongs to the Integrator subunit 13 family. As to quaternary structure, belongs to the multiprotein complex Integrator, at least composed of IntS1, IntS2, IntS3, IntS4, omd/IntS5, IntS6, defl/IntS7, IntS8, IntS9, IntS10, IntS11, IntS12, asun/IntS13, IntS14 and IntS15. The core complex associates with protein phosphatase 2A subunits mts/PP2A and Pp2A-29B, to form the Integrator-PP2A (INTAC) complex. In terms of processing, phosphorylated.

It is found in the nucleus. It localises to the cytoplasm. The protein resides in the perinuclear region. Functionally, component of the integrator complex, a multiprotein complex that terminates RNA polymerase II (Pol II) transcription in the promoter-proximal region of genes. The integrator complex provides a quality checkpoint during transcription elongation by driving premature transcription termination of transcripts that are unfavorably configured for transcriptional elongation: the complex terminates transcription by (1) catalyzing dephosphorylation of the C-terminal domain (CTD) of Pol II subunit Polr2A/Rbp1 and Spt5, and (2) degrading the exiting nascent RNA transcript via endonuclease activity. The integrator complex is also involved in the 3'-end processing of the U7 snRNA, and also the spliceosomal snRNAs U1, U2, U4 and U5. The sequence is that of Protein asunder (asun) from Drosophila sechellia (Fruit fly).